A 443-amino-acid polypeptide reads, in one-letter code: Sperm-associated antigen 4 protein (443 aa).

Residues 1 to 36 (MRRSPRSGSAASSHNHTPNFYSENSNSSHSATSGDS) show a composition bias toward low complexity. Residues 1–107 (MRRSPRSGSA…VRGGASEPSG (107 aa)) are disordered. 2 consecutive transmembrane segments (helical) span residues 137 to 157 (FLSL…DGLV) and 168 to 188 (FLFT…WGLL). Positions 203–244 (TLSQYHHRVHSQGQQLQQLQAELNKLHKEVSSVRAAHSERVA) form a coiled coil. Residues 267–427 (GASIDLEKTS…YRVRAHGVRT (161 aa)) form the SUN domain.

In terms of assembly, self-associates. Interacts with ODF1. May associate with microtubules. Interacts with SUN3 and SYNE1; suggesting the formation of a spermatogenesis-specific LINC complex; a SUN domain-based heterotrimer of SPAG4 and SUN3 may associate with SYNE1. Interacts with SEPT12 and LMNB1; during spermatogenesis. Isoform 1 is testis specific and is exclusively expressed in spermatids.

The protein resides in the membrane. The protein localises to the cytoplasm. It localises to the cytoskeleton. Its subcellular location is the nucleus envelope. It is found in the nucleus inner membrane. The protein resides in the flagellum axoneme. Functionally, involved in spermatogenesis. Required for sperm head formation but not required to establish and maintain general polarity of the sperm head. Required for anchoring and organization of the manchette. Required for targeting of SUN3 and probably SYNE1 through a probable SUN1:SYNE3 LINC complex to the nuclear envelope and involved in accurate posterior sperm head localization of the complex. May anchor SUN3 the nuclear envelope. Involved in maintenance of the nuclear envelope integrity. May assist the organization and assembly of outer dense fibers (ODFs), a specific structure of the sperm tail. This Mus musculus (Mouse) protein is Sperm-associated antigen 4 protein (Spag4).